Consider the following 98-residue polypeptide: NADH-ubiquinone oxidoreductase chain 4L (98 aa).

3 helical membrane-spanning segments follow: residues 1-21 (MSLV…GLLM), 29-49 (SLLC…LMIL), and 61-81 (IILL…LVMV).

The protein belongs to the complex I subunit 4L family. Core subunit of respiratory chain NADH dehydrogenase (Complex I) which is composed of 45 different subunits.

The protein resides in the mitochondrion inner membrane. The catalysed reaction is a ubiquinone + NADH + 5 H(+)(in) = a ubiquinol + NAD(+) + 4 H(+)(out). Core subunit of the mitochondrial membrane respiratory chain NADH dehydrogenase (Complex I) which catalyzes electron transfer from NADH through the respiratory chain, using ubiquinone as an electron acceptor. Part of the enzyme membrane arm which is embedded in the lipid bilayer and involved in proton translocation. The chain is NADH-ubiquinone oxidoreductase chain 4L (MT-ND4L) from Ovis aries (Sheep).